We begin with the raw amino-acid sequence, 131 residues long: MRHRKSGRQLNRNASHRKAMFKNMANSLFLYKTIRTTLPKAKELRRVVEPLITKAKIDSVANRRNAFSKLRDSAIVAKLFTELAPFYKDRPGGYIRILKAGFRTGDKAAMAIVQLIDLETMTDTTAGTTTS.

The protein belongs to the bacterial ribosomal protein bL17 family. In terms of assembly, part of the 50S ribosomal subunit. Contacts protein L32.

This chain is Large ribosomal subunit protein bL17, found in Vesicomyosocius okutanii subsp. Calyptogena okutanii (strain HA).